Here is a 286-residue protein sequence, read N- to C-terminus: Ribosomal RNA small subunit methyltransferase A (286 aa).

Residues asparagine 28, leucine 30, glycine 55, glutamate 77, aspartate 103, and asparagine 123 each coordinate S-adenosyl-L-methionine.

Belongs to the class I-like SAM-binding methyltransferase superfamily. rRNA adenine N(6)-methyltransferase family. RsmA subfamily.

Its subcellular location is the cytoplasm. The catalysed reaction is adenosine(1518)/adenosine(1519) in 16S rRNA + 4 S-adenosyl-L-methionine = N(6)-dimethyladenosine(1518)/N(6)-dimethyladenosine(1519) in 16S rRNA + 4 S-adenosyl-L-homocysteine + 4 H(+). In terms of biological role, specifically dimethylates two adjacent adenosines (A1518 and A1519) in the loop of a conserved hairpin near the 3'-end of 16S rRNA in the 30S particle. May play a critical role in biogenesis of 30S subunits. The chain is Ribosomal RNA small subunit methyltransferase A from Rhodopseudomonas palustris (strain BisB18).